The following is a 344-amino-acid chain: MTDTLTIVRPDDWHLHLRDGDALADVVGDTARQFGRAIIMPNLKPPVTTTAQARAYRERILAALPAGTQFEPLMTLYLTDNTSPEVIREARASGFIHGVKLYPAGATTNSDAGVTDLRRCAKTLEAMQEVGMPLLVHGEVTDPTVDIFDREAVFIDTVMLPLRRDFPALKVVFEHITTKHAAEYVRDAEGPVGATITAHHLLYNRNALFVGGIRPHYYCLPVLKRETHRLALVAAATSGHPRFFLGTDSAPHAKGVKEHACGCAGCYTALHAMELYAEAFEDANALDKLEGFASLHGPDFYGLPRNAGTLTLTRSQWQLPAEVPFGEQTLVPLRGGEMLRWKSV.

The Zn(2+) site is built by His-14 and His-16. Substrate is bound by residues 16–18 (HLR) and Asn-42. Positions 100, 137, and 175 each coordinate Zn(2+). An N6-carboxylysine modification is found at Lys-100. Position 137 (His-137) interacts with substrate. A substrate-binding site is contributed by Leu-220. Asp-248 is a Zn(2+) binding site. Asp-248 is an active-site residue. Substrate-binding residues include His-252 and Ala-264.

The protein belongs to the metallo-dependent hydrolases superfamily. DHOase family. Class II DHOase subfamily. Homodimer. Requires Zn(2+) as cofactor.

It catalyses the reaction (S)-dihydroorotate + H2O = N-carbamoyl-L-aspartate + H(+). The protein operates within pyrimidine metabolism; UMP biosynthesis via de novo pathway; (S)-dihydroorotate from bicarbonate: step 3/3. Catalyzes the reversible cyclization of carbamoyl aspartate to dihydroorotate. In Ralstonia pickettii (strain 12J), this protein is Dihydroorotase.